We begin with the raw amino-acid sequence, 386 residues long: Citrate synthase (386 aa).

Residues His-266 and Asp-322 contribute to the active site.

Belongs to the citrate synthase family.

The catalysed reaction is oxaloacetate + acetyl-CoA + H2O = citrate + CoA + H(+). It participates in carbohydrate metabolism; tricarboxylic acid cycle; isocitrate from oxaloacetate: step 1/2. This Acidithiobacillus ferridurans protein is Citrate synthase (gltA).